The following is a 799-amino-acid chain: 1-phosphatidylinositol 4,5-bisphosphate phosphodiesterase delta-4 (799 aa).

The PH domain occupies 16-124 (LLMQEGMPMR…WMRGLHLLVD (109 aa)). A substrate binding region spans residues 26-53 (KVRSKSWKKLRYFRLQNDGMTVWHARQA). EF-hand domains lie at 134–169 (RLDQWLSDWFQRGDKNQDGKMSFQEVQRLLHLMNVE), 170–205 (MDQEYAFSLFQAADTSQSGTLEGEEFVEFYKALTKR), and 206–237 (AEVQELFESFSADGQKLTLLEFSDFLREEQKE). Residues aspartate 147, asparagine 149, aspartate 151, lysine 153, glutamate 158, aspartate 183, serine 185, serine 187, threonine 189, and glutamate 194 each coordinate Ca(2+). The GBA signature appears at 213-243 (ESFSADGQKLTLLEFSDFLREEQKERDCTSE). Residues 290-435 (QDMTQPLNHY…LRRKILVKGK (146 aa)) form the PI-PLC X-box domain. The active site involves histidine 305. Asparagine 306, glutamate 335, and aspartate 337 together coordinate Ca(2+). Residue histidine 350 is part of the active site. Residue glutamate 384 coordinates Ca(2+). Residues lysine 433 and lysine 435 each coordinate substrate. Serine 460 is subject to Phosphoserine. In terms of domain architecture, PI-PLC Y-box spans 530–646 (LSSLVIYLKS…GYVLKPDFLR (117 aa)). The substrate site is built by serine 559 and arginine 586. The region spanning 646-773 (RDNQSSFHPE…QGYRHIHLLS (128 aa)) is the C2 domain. Isoleucine 687, aspartate 689, asparagine 713, aspartate 742, tyrosine 743, and aspartate 744 together coordinate Ca(2+). The PDZ-binding motif lies at 768–771 (HIHL).

Interacts with GRIP1. Interacts (via GBA motif) with guanine nucleotide-binding protein G(i) alpha subunit GNAI3 (inactive GDP-bound form); low-affinity interaction. It depends on Ca(2+) as a cofactor.

It is found in the membrane. Its subcellular location is the nucleus. The protein resides in the cytoplasm. It localises to the endoplasmic reticulum. The catalysed reaction is a 1,2-diacyl-sn-glycero-3-phospho-(1D-myo-inositol-4,5-bisphosphate) + H2O = 1D-myo-inositol 1,4,5-trisphosphate + a 1,2-diacyl-sn-glycerol + H(+). It catalyses the reaction a 1,2-diacyl-sn-glycero-3-phospho-(1D-myo-inositol) + H2O = 1D-myo-inositol 1-phosphate + a 1,2-diacyl-sn-glycerol + H(+). Its function is as follows. Hydrolyzes the phosphatidylinositol 4,5-bisphosphate (PIP2) to generate 2 second messenger molecules diacylglycerol (DAG) and inositol 1,4,5-trisphosphate (IP3). DAG mediates the activation of protein kinase C (PKC), while IP3 releases Ca(2+) from intracellular stores. Required for acrosome reaction in sperm during fertilization, probably by acting as an important enzyme for intracellular Ca(2+) mobilization in the zona pellucida-induced acrosome reaction. May play a role in cell growth. Modulates the liver regeneration in cooperation with nuclear PKC. Overexpression up-regulates the Erk signaling pathway and proliferation. This is 1-phosphatidylinositol 4,5-bisphosphate phosphodiesterase delta-4 (PLCD4) from Macaca fascicularis (Crab-eating macaque).